A 30-amino-acid polypeptide reads, in one-letter code: U10-ctenitoxin-Co1b (30 aa).

2 cysteine pairs are disulfide-bonded: cysteine 2-cysteine 17 and cysteine 9-cysteine 22.

In terms of tissue distribution, expressed by the venom gland.

It is found in the secreted. Antagonist of L-type calcium channels (Cav1/CACNA1). This Ctenus ornatus (Brazilian spider) protein is U10-ctenitoxin-Co1b.